Consider the following 489-residue polypeptide: Type II restriction enzyme Sau3AI (489 aa).

Mg(2+) serves as cofactor.

The enzyme catalyses Endonucleolytic cleavage of DNA to give specific double-stranded fragments with terminal 5'-phosphates.. In terms of biological role, an E and P subtype restriction enzyme that recognizes the double-stranded sequence 5'-GATC-3' and cleaves before G-1. This chain is Type II restriction enzyme Sau3AI (sau3AIR), found in Staphylococcus aureus.